The following is a 127-amino-acid chain: Large ribosomal subunit protein uL18 (127 aa).

The protein belongs to the universal ribosomal protein uL18 family. Part of the 50S ribosomal subunit; part of the 5S rRNA/L5/L18/L25 subcomplex. Contacts the 5S and 23S rRNAs.

Its function is as follows. This is one of the proteins that bind and probably mediate the attachment of the 5S RNA into the large ribosomal subunit, where it forms part of the central protuberance. This Streptomyces coelicolor (strain ATCC BAA-471 / A3(2) / M145) protein is Large ribosomal subunit protein uL18.